Here is a 178-residue protein sequence, read N- to C-terminus: MSELTTLARPYAKAVFEVAQGAGDLARWSDQLGFMAAVVHDPTMKAFLDSPKLTREAAADTVIGVCEGRIDDQGKNFVRLLAENGRLTLLPEIAAIYEVMRAEAEGKVEALVVSAQPVSDAQKSAIAQSLAKRLGREVELVCEVDESLIGGAVIRAGDLVIDGSVRGRLERMAANLSR.

Belongs to the ATPase delta chain family. As to quaternary structure, F-type ATPases have 2 components, F(1) - the catalytic core - and F(0) - the membrane proton channel. F(1) has five subunits: alpha(3), beta(3), gamma(1), delta(1), epsilon(1). F(0) has three main subunits: a(1), b(2) and c(10-14). The alpha and beta chains form an alternating ring which encloses part of the gamma chain. F(1) is attached to F(0) by a central stalk formed by the gamma and epsilon chains, while a peripheral stalk is formed by the delta and b chains.

It is found in the cell inner membrane. In terms of biological role, f(1)F(0) ATP synthase produces ATP from ADP in the presence of a proton or sodium gradient. F-type ATPases consist of two structural domains, F(1) containing the extramembraneous catalytic core and F(0) containing the membrane proton channel, linked together by a central stalk and a peripheral stalk. During catalysis, ATP synthesis in the catalytic domain of F(1) is coupled via a rotary mechanism of the central stalk subunits to proton translocation. Functionally, this protein is part of the stalk that links CF(0) to CF(1). It either transmits conformational changes from CF(0) to CF(1) or is implicated in proton conduction. The chain is ATP synthase subunit delta from Thioalkalivibrio sulfidiphilus (strain HL-EbGR7).